The sequence spans 443 residues: Xaa-Pro dipeptidase (443 aa).

Residues D246, D257, H339, E384, and E423 each contribute to the Mn(2+) site.

This sequence belongs to the peptidase M24B family. Bacterial-type prolidase subfamily. Requires Mn(2+) as cofactor.

It catalyses the reaction Xaa-L-Pro dipeptide + H2O = an L-alpha-amino acid + L-proline. Its function is as follows. Splits dipeptides with a prolyl residue in the C-terminal position. The sequence is that of Xaa-Pro dipeptidase from Citrobacter koseri (strain ATCC BAA-895 / CDC 4225-83 / SGSC4696).